A 286-amino-acid chain; its full sequence is E3 SUMO-protein ligase K-bZIP (286 aa).

Disordered stretches follow at residues M1–E22 and W106–R130.

As to quaternary structure, interacts with host HDAC1 and HDAC2, these interactions suppress HDAC activities. Interacts with protein ORF57. Interacts with protein vPK. Post-translationally, sumoylated.

It participates in protein modification; protein sumoylation. In terms of biological role, SUMO E3 ligase that plays a role in viral gene regulation and is essential for viral reactivation. Disrupts host G1 cell cycle control thus allowing viral transcription and translation to proceed at the early stages of infection. Catalyzes its own SUMO modification as well as that of its interacting partners such as host TP53 and RB1. Regulates viral gene expression and reactivation and may mediate the SUMOylation of viral promoters in the low methylated 'Lys-9' histone H3 (H3K9me) region which results in a diminution of viral gene expression after reactivation. SUMOylates also host histone lysine demethylase 4A/KDM4A, an essential step for complete enrichment of SUMO-2/3 on the viral genome during viral transactivation and reactivation. This Human herpesvirus 8 type P (isolate GK18) (HHV-8) protein is E3 SUMO-protein ligase K-bZIP (K8).